Here is a 349-residue protein sequence, read N- to C-terminus: Green-sensitive opsin-2 (349 aa).

At 1–36 the chain is on the extracellular side; sequence MNGTEGNNFYVPLSNRTGLVRSPFEYPQYYLAEPWQ. Residues asparagine 2 and asparagine 15 are each glycosylated (N-linked (GlcNAc...) asparagine). Residues 37-61 form a helical membrane-spanning segment; it reads FKLLAVYMFFLICLGLPINGLTLIC. Residues 62–73 lie on the Cytoplasmic side of the membrane; it reads TAQHKKLRQPLN. A helical transmembrane segment spans residues 74 to 99; it reads FILVNLAVAGAIMVCFGFTVTFYTAI. Over 100–113 the chain is Extracellular; it reads NGYFALGPTGCAVE. Cysteine 110 and cysteine 187 are oxidised to a cystine. A helical transmembrane segment spans residues 114–133; sequence GFMATLGGEVALWSLVVLAI. Residues 134–152 are Cytoplasmic-facing; the sequence is ERYIVVCKPMGSFKFSSTH. Residues 153 to 176 traverse the membrane as a helical segment; it reads ASAGIAFTWVMAMACAAPPLVGWS. Topologically, residues 177 to 202 are extracellular; the sequence is RYIPEGIQCSCGPDYYTLNPEYNNES. Residues 203–230 form a helical membrane-spanning segment; sequence YVLYMFICHFILPVTIIFFTYGRLVCTV. The Cytoplasmic segment spans residues 231-252; it reads KAAAAQQQDSASTQKAEREVTK. Residues 253–276 form a helical membrane-spanning segment; the sequence is MVILMVLGFLVAWTPYATVAAWIF. The Extracellular portion of the chain corresponds to 277–284; the sequence is FNKGAAFS. A helical transmembrane segment spans residues 285–309; sequence AQFMAIPAFFSKTSALYNPVIYVLL. Residue lysine 296 is modified to N6-(retinylidene)lysine. The Cytoplasmic portion of the chain corresponds to 310 to 349; the sequence is NKQFRSCMLTTLFCGKNPLGDEESSTVSTSKTEVSSVSPA. Positions 329-349 are disordered; the sequence is GDEESSTVSTSKTEVSSVSPA. Over residues 334–349 the composition is skewed to low complexity; it reads STVSTSKTEVSSVSPA.

This sequence belongs to the G-protein coupled receptor 1 family. Opsin subfamily. Post-translationally, phosphorylated on some or all of the serine and threonine residues present in the C-terminal region. As to expression, the color pigments are found in the cone photoreceptor cells.

The protein localises to the membrane. Visual pigments are the light-absorbing molecules that mediate vision. They consist of an apoprotein, opsin, covalently linked to cis-retinal. The sequence is that of Green-sensitive opsin-2 from Carassius auratus (Goldfish).